A 45-amino-acid polypeptide reads, in one-letter code: Mu-conotoxin-like Cal 12.1.1d (45 aa).

4 cysteine pairs are disulfide-bonded: Cys-3/Cys-16, Cys-11/Cys-28, Cys-18/Cys-33, and Cys-27/Cys-39. Trp-17 carries the post-translational modification 6'-bromotryptophan. Glu-21 is modified (4-carboxyglutamate). Residue Pro-23 is modified to 4-hydroxyproline. 6'-bromotryptophan is present on residues Trp-37 and Trp-38. A 4-hydroxyproline modification is found at Pro-40. Trp-44 is subject to 6'-bromotryptophan.

Expressed by the venom duct.

It is found in the secreted. In terms of biological role, mu-conotoxins block voltage-gated sodium channels. This toxin reversibly blocks voltage-gated sodium channel in cephalopods, with no alteration in the voltage dependence of sodium conductance or on the kinetics of inactivation. The protein is Mu-conotoxin-like Cal 12.1.1d of Californiconus californicus (California cone).